The following is a 47-amino-acid chain: Photosystem II reaction center protein K (47 aa).

Positions 1 to 10 (MNIGFDMILA) are excised as a propeptide. A helical transmembrane segment spans residues 22-42 (LVDVLPVIPLLFLLLAFVWQA).

Belongs to the PsbK family. In terms of assembly, PSII is composed of 1 copy each of membrane proteins PsbA, PsbB, PsbC, PsbD, PsbE, PsbF, PsbH, PsbI, PsbJ, PsbK, PsbL, PsbM, PsbT, PsbX, PsbY, PsbZ, Psb30/Ycf12, at least 3 peripheral proteins of the oxygen-evolving complex and a large number of cofactors. It forms dimeric complexes.

The protein localises to the plastid. The protein resides in the chloroplast thylakoid membrane. Functionally, one of the components of the core complex of photosystem II (PSII). PSII is a light-driven water:plastoquinone oxidoreductase that uses light energy to abstract electrons from H(2)O, generating O(2) and a proton gradient subsequently used for ATP formation. It consists of a core antenna complex that captures photons, and an electron transfer chain that converts photonic excitation into a charge separation. This Mesostigma viride (Green alga) protein is Photosystem II reaction center protein K.